The following is a 136-amino-acid chain: Large ribosomal subunit protein uL16 (136 aa).

This sequence belongs to the universal ribosomal protein uL16 family. In terms of assembly, part of the 50S ribosomal subunit.

In terms of biological role, binds 23S rRNA and is also seen to make contacts with the A and possibly P site tRNAs. This is Large ribosomal subunit protein uL16 from Haemophilus ducreyi (strain 35000HP / ATCC 700724).